We begin with the raw amino-acid sequence, 162 residues long: Mediator of RNA polymerase II transcription subunit 31 (162 aa).

A disordered region spans residues 131–162 (VQGGQNVEAGDTGHNEGDQGTQQDKENIALKT). The span at 141–162 (DTGHNEGDQGTQQDKENIALKT) shows a compositional bias: basic and acidic residues.

It belongs to the Mediator complex subunit 31 family. In terms of assembly, component of the Mediator complex.

The protein localises to the nucleus. Its function is as follows. Component of the Mediator complex, a coactivator involved in the regulated transcription of nearly all RNA polymerase II-dependent genes. Mediator functions as a bridge to convey information from gene-specific regulatory proteins to the basal RNA polymerase II transcription machinery. Mediator is recruited to promoters by direct interactions with regulatory proteins and serves as a scaffold for the assembly of a functional preinitiation complex with RNA polymerase II and the general transcription factors. This chain is Mediator of RNA polymerase II transcription subunit 31 (soh1), found in Aspergillus fumigatus (strain ATCC MYA-4609 / CBS 101355 / FGSC A1100 / Af293) (Neosartorya fumigata).